We begin with the raw amino-acid sequence, 69 residues long: Double-strand break reduction protein (69 aa).

Functionally, helps to maintain the integrity of the chromosome by lowering the steady-state level of double strand breaks. This region of DNA acts as an antitoxin to toxin RalR, a DNase, but it seems to be sRNA RalA that has the antitoxin activity and not this putative protein. Therefore the identity of this as a protein-coding gene has been cast into doubt. The sequence is that of Double-strand break reduction protein from Escherichia coli (strain K12).